Consider the following 264-residue polypeptide: Tryptophan synthase alpha chain (264 aa).

Catalysis depends on proton acceptor residues Glu-49 and Asp-60.

The protein belongs to the TrpA family. Tetramer of two alpha and two beta chains.

It carries out the reaction (1S,2R)-1-C-(indol-3-yl)glycerol 3-phosphate + L-serine = D-glyceraldehyde 3-phosphate + L-tryptophan + H2O. The protein operates within amino-acid biosynthesis; L-tryptophan biosynthesis; L-tryptophan from chorismate: step 5/5. The alpha subunit is responsible for the aldol cleavage of indoleglycerol phosphate to indole and glyceraldehyde 3-phosphate. The sequence is that of Tryptophan synthase alpha chain from Geotalea daltonii (strain DSM 22248 / JCM 15807 / FRC-32) (Geobacter daltonii).